The following is a 338-amino-acid chain: Heat-inducible transcription repressor HrcA (338 aa).

The protein belongs to the HrcA family.

In terms of biological role, negative regulator of class I heat shock genes (grpE-dnaK-dnaJ and groELS operons). Prevents heat-shock induction of these operons. The protein is Heat-inducible transcription repressor HrcA of Bacillus cereus (strain AH187).